The sequence spans 400 residues: Renin (400 aa).

A signal peptide spans 1 to 23 (MDAWRGMPRWGLLLLLWGSCTFG). Positions 24 to 60 (LPTETTTFKRISLKRMPSIRESLKERGVDMARLGPER) are cleaved as a propeptide — activation peptide. Asparagine 65 is a glycosylation site (N-linked (GlcNAc...) asparagine). A Peptidase A1 domain is found at 80–397 (YYGEIGIGTP…DRGNNRIGFA (318 aa)). The active site involves aspartate 98. A disulfide bridge connects residues cysteine 111 and cysteine 118. Asparagine 135 carries N-linked (GlcNAc...) asparagine glycosylation. A disulfide bridge links cysteine 277 with cysteine 281. Residue aspartate 286 is part of the active site. Cysteine 319 and cysteine 356 are joined by a disulfide.

The protein belongs to the peptidase A1 family. In terms of assembly, interacts with ATP6AP2.

It is found in the secreted. It localises to the membrane. It carries out the reaction Cleavage of Leu-|-Xaa bond in angiotensinogen to generate angiotensin I.. Its activity is regulated as follows. Interaction with ATP6AP2 results in a 5-fold increased efficiency in angiotensinogen processing. Renin is a highly specific endopeptidase, whose only known function is to generate angiotensin I from angiotensinogen in the plasma, initiating a cascade of reactions that produce an elevation of blood pressure and increased sodium retention by the kidney. This is Renin (REN) from Callithrix jacchus (White-tufted-ear marmoset).